Here is a 431-residue protein sequence, read N- to C-terminus: Adenylosuccinate synthetase (431 aa).

Residues 13–19 (GDEGKGK) and 41–43 (GHT) each bind GTP. Catalysis depends on Asp-14, which acts as the Proton acceptor. Mg(2+) contacts are provided by Asp-14 and Gly-41. IMP is bound by residues 14–17 (DEGK), 39–42 (NAGH), Thr-130, Arg-144, Gln-225, Thr-240, and Arg-304. His-42 serves as the catalytic Proton donor. Position 300–306 (300–306 (ATTGRER)) interacts with substrate. GTP contacts are provided by residues Arg-306, 332–334 (KLD), and 415–417 (STG).

It belongs to the adenylosuccinate synthetase family. As to quaternary structure, homodimer. Mg(2+) is required as a cofactor.

The protein resides in the cytoplasm. It catalyses the reaction IMP + L-aspartate + GTP = N(6)-(1,2-dicarboxyethyl)-AMP + GDP + phosphate + 2 H(+). It functions in the pathway purine metabolism; AMP biosynthesis via de novo pathway; AMP from IMP: step 1/2. In terms of biological role, plays an important role in the de novo pathway of purine nucleotide biosynthesis. Catalyzes the first committed step in the biosynthesis of AMP from IMP. This chain is Adenylosuccinate synthetase, found in Colwellia psychrerythraea (strain 34H / ATCC BAA-681) (Vibrio psychroerythus).